A 1487-amino-acid polypeptide reads, in one-letter code: Probable serine/threonine-protein kinase roco11 (1487 aa).

The disordered stretch occupies residues 108 to 134 (TQPSSSHNHSNHHHHHHQQQLQQQQQQ). Residues 116–125 (HSNHHHHHHQ) are compositionally biased toward basic residues. 3 LRR repeats span residues 295 to 316 (NLAE…ICQL), 318 to 340 (HLKI…ANLT), and 341 to 362 (NLKY…IIEQ). Residues 379-564 (KSETWNKVKL…KILTNEAEKS (186 aa)) form the Roc domain. The segment at 379-564 (KSETWNKVKL…KILTNEAEKS (186 aa)) is small GTPase-like. Residues 392 to 399 (GQEGVGKS), 448 to 452 (DFGGQ), and 507 to 510 (THCD) contribute to the GTP site. Residues 678–872 (VNQKYIDYND…KTYWANGILL (195 aa)) form the COR domain. Residues 891 to 1007 (SILPNNSSST…NNNNNNNNNI (117 aa)) are disordered. The segment covering 897-931 (SSSTSSSTSSSTSSSTSSSSSSSTSSSSTSTTTTT) has biased composition (low complexity). The segment covering 932–950 (VQIQSSPFGNSTTIVNKLT) has biased composition (polar residues). Residues 951-1007 (NIDNNNNNNNNNNNNNNNNNNINNNNNNNNNNNNNNNNNNNNNNNNNNNNNNNNNNI) show a composition bias toward low complexity. Residues 1185-1452 (VVCEEQIGVG…YIVKELTNFY (268 aa)) enclose the Protein kinase domain. Residues 1191–1199 (IGVGGFGLV) and Lys1216 each bind ATP. Asp1313 (proton acceptor) is an active-site residue. The tract at residues 1464-1487 (KSINDKSPHPDLISNGVPKLQIAK) is disordered.

The protein belongs to the protein kinase superfamily. TKL Ser/Thr protein kinase family. ROCO subfamily.

It catalyses the reaction L-seryl-[protein] + ATP = O-phospho-L-seryl-[protein] + ADP + H(+). It carries out the reaction L-threonyl-[protein] + ATP = O-phospho-L-threonyl-[protein] + ADP + H(+). The protein is Probable serine/threonine-protein kinase roco11 (roco11) of Dictyostelium discoideum (Social amoeba).